A 434-amino-acid polypeptide reads, in one-letter code: Protein trichome birefringence-like 3 (434 aa).

Residues 15–35 traverse the membrane as a helical; Signal-anchor for type II membrane protein segment; that stretch reads IPLSIIVLVLCGFMFFILLYT. The short motif at 166 to 168 is the GDS motif element; the sequence is GDS. The DCXHWCLPGXXDXWN motif motif lies at 413 to 427; that stretch reads DCIHWCLPGLPDTWN.

It belongs to the PC-esterase family. TBL subfamily.

The protein localises to the golgi apparatus membrane. In terms of biological role, involved in secondary cell wall cellulose deposition. Required for normal stem development. May act as a bridging protein that binds pectin and other cell wall polysaccharides. Probably involved in maintaining esterification of pectins. May be involved in the specific O-acetylation of cell wall polymers. The polypeptide is Protein trichome birefringence-like 3 (TBL3) (Arabidopsis thaliana (Mouse-ear cress)).